Here is a 338-residue protein sequence, read N- to C-terminus: Holliday junction branch migration complex subunit RuvB (338 aa).

The segment at 4–186 (ADRLIAPDNP…FGITQRLEYY (183 aa)) is large ATPase domain (RuvB-L). ATP-binding positions include Ile25, Arg26, Gly67, Lys70, Thr71, Thr72, 133 to 135 (EDY), Arg176, Tyr186, and Arg223. Thr71 is a Mg(2+) binding site. The segment at 187–257 (KVEDLQNIVQ…VADKALNMLD (71 aa)) is small ATPAse domain (RuvB-S). The head domain (RuvB-H) stretch occupies residues 260–338 (AKGFDYMDRK…HFGIDKPSNR (79 aa)). DNA is bound by residues Arg296, Arg315, and Arg320.

It belongs to the RuvB family. As to quaternary structure, homohexamer. Forms an RuvA(8)-RuvB(12)-Holliday junction (HJ) complex. HJ DNA is sandwiched between 2 RuvA tetramers; dsDNA enters through RuvA and exits via RuvB. An RuvB hexamer assembles on each DNA strand where it exits the tetramer. Each RuvB hexamer is contacted by two RuvA subunits (via domain III) on 2 adjacent RuvB subunits; this complex drives branch migration. In the full resolvosome a probable DNA-RuvA(4)-RuvB(12)-RuvC(2) complex forms which resolves the HJ.

Its subcellular location is the cytoplasm. The catalysed reaction is ATP + H2O = ADP + phosphate + H(+). The RuvA-RuvB-RuvC complex processes Holliday junction (HJ) DNA during genetic recombination and DNA repair, while the RuvA-RuvB complex plays an important role in the rescue of blocked DNA replication forks via replication fork reversal (RFR). RuvA specifically binds to HJ cruciform DNA, conferring on it an open structure. The RuvB hexamer acts as an ATP-dependent pump, pulling dsDNA into and through the RuvAB complex. RuvB forms 2 homohexamers on either side of HJ DNA bound by 1 or 2 RuvA tetramers; 4 subunits per hexamer contact DNA at a time. Coordinated motions by a converter formed by DNA-disengaged RuvB subunits stimulates ATP hydrolysis and nucleotide exchange. Immobilization of the converter enables RuvB to convert the ATP-contained energy into a lever motion, pulling 2 nucleotides of DNA out of the RuvA tetramer per ATP hydrolyzed, thus driving DNA branch migration. The RuvB motors rotate together with the DNA substrate, which together with the progressing nucleotide cycle form the mechanistic basis for DNA recombination by continuous HJ branch migration. Branch migration allows RuvC to scan DNA until it finds its consensus sequence, where it cleaves and resolves cruciform DNA. This Vibrio atlanticus (strain LGP32) (Vibrio splendidus (strain Mel32)) protein is Holliday junction branch migration complex subunit RuvB.